Consider the following 260-residue polypeptide: MINRFLIALSFLTVLPLKFKEINEKELIRSIIFFPFIGFLEGVFCIFLVNIFKQIFSSSVISIILLVFLFSVRGIFHIDGLSDTFDALFYKGTGQKEKDLQQRLQIMKDSVIGVAGAVALVLDVLCRFAFVKELIDINQFLIFLFMFCFSRWIVIPLMYYGKPARTTGLGVLFIGKISSWQVIISTVLPIFLLVYFTIEKNFIFLPLIALFLFFISYILKKFFERKFNGITGDHLGATVEITEIVFLICFLLGEKLWLSY.

The next 7 membrane-spanning stretches (helical) occupy residues 31–51, 55–75, 111–131, 140–160, 177–197, 202–222, and 234–254; these read IIFF…LVNI, IFSS…VRGI, VIGV…FAFV, FLIF…LMYY, ISSW…VYFT, FIFL…LKKF, and HLGA…LLGE.

It belongs to the CobS family. Requires Mg(2+) as cofactor.

The protein resides in the cell inner membrane. The catalysed reaction is alpha-ribazole + adenosylcob(III)inamide-GDP = adenosylcob(III)alamin + GMP + H(+). It catalyses the reaction alpha-ribazole 5'-phosphate + adenosylcob(III)inamide-GDP = adenosylcob(III)alamin 5'-phosphate + GMP + H(+). The protein operates within cofactor biosynthesis; adenosylcobalamin biosynthesis; adenosylcobalamin from cob(II)yrinate a,c-diamide: step 7/7. Joins adenosylcobinamide-GDP and alpha-ribazole to generate adenosylcobalamin (Ado-cobalamin). Also synthesizes adenosylcobalamin 5'-phosphate from adenosylcobinamide-GDP and alpha-ribazole 5'-phosphate. This chain is Adenosylcobinamide-GDP ribazoletransferase, found in Thermodesulfovibrio yellowstonii (strain ATCC 51303 / DSM 11347 / YP87).